The primary structure comprises 85 residues: U4-theraphotoxin-Hhn1s (85 aa).

Positions 1 to 22 are cleaved as a signal peptide; it reads MKVTLIAILTCAAVLVLHTTAA. A propeptide spanning residues 23-48 is cleaved from the precursor; the sequence is EELEAESQLMEVGMPDTELAAVDEER. Disulfide bonds link Cys52–Cys66, Cys56–Cys77, and Cys71–Cys82.

The protein belongs to the neurotoxin 12 (Hwtx-2) family. 02 (Hwtx-2) subfamily. In terms of tissue distribution, expressed by the venom gland.

It is found in the secreted. Its function is as follows. Postsynaptic neurotoxin. In Cyriopagopus hainanus (Chinese bird spider), this protein is U4-theraphotoxin-Hhn1s.